The following is a 327-amino-acid chain: GMP reductase (327 aa).

Cys175 (thioimidate intermediate) is an active-site residue. 204 to 227 (IIADGGIRTHGDIAKSVRFGASMV) contacts NADP(+).

Belongs to the IMPDH/GMPR family. GuaC type 2 subfamily.

It carries out the reaction IMP + NH4(+) + NADP(+) = GMP + NADPH + 2 H(+). Catalyzes the irreversible NADPH-dependent deamination of GMP to IMP. It functions in the conversion of nucleobase, nucleoside and nucleotide derivatives of G to A nucleotides, and in maintaining the intracellular balance of A and G nucleotides. This is GMP reductase from Lysinibacillus sphaericus (strain C3-41).